The chain runs to 178 residues: FXYD domain-containing ion transport regulator 5 (178 aa).

Positions 1-21 (MSLSSRLCLLTIVALILPSRG) are cleaved as a signal peptide. Residues 21–59 (GQTPKKPTSIFTADQTSATTRDNVPDPDQTSPGVQTTPL) show a composition bias toward polar residues. The interval 21–130 (GQTPKKPTSI…SYIEHPLDSN (110 aa)) is disordered. At 22–145 (QTPKKPTSIF…YYDDTTLRKR (124 aa)) the chain is on the extracellular side. The span at 67-79 (TGSQTAAQTETQQ) shows a compositional bias: low complexity. Over residues 80–100 (LTKMATSNPVSDPGPHTSSKK) the composition is skewed to polar residues. A helical membrane pass occupies residues 146 to 166 (GLLVAAVLFITGIIILTSGKC). The Cytoplasmic segment spans residues 167-178 (RQLSQFCLNRHR).

This sequence belongs to the FXYD family. Regulatory subunit of the sodium/potassium-transporting ATPase which is composed of a catalytic alpha subunit, a non-catalytic beta subunit and an additional regulatory subunit. The regulatory subunit, a member of the FXYD protein family, modulates the enzymatic activity in a tissue- and isoform-specific way by changing affinities of the Na+/K+-ATPase toward Na(+), K(+) or ATP. In terms of processing, glycosylated. In terms of tissue distribution, expressed mainly in epithelial tissue, such as lung, intestine and kidney. Not detected in brain, liver, muscle, and heart.

The protein localises to the cell membrane. The protein resides in the basolateral cell membrane. Associates with and regulates the activity of the sodium/potassium-transporting ATPase (NKA) which catalyzes the hydrolysis of ATP coupled with the exchange of Na(+) and K(+) ions across the plasma membrane. May increase NKA activity by increasing the apparent affinity for Na(+). Involved in down-regulation of E-cadherin which results in reduced cell adhesion. Promotes metastasis. The sequence is that of FXYD domain-containing ion transport regulator 5 (Fxyd5) from Mus musculus (Mouse).